We begin with the raw amino-acid sequence, 123 residues long: MLLDNDAFLSALNKLYQTTSKKGTVWVTMKKYVDSDSNFSRKKAERIKESEEEENKCLVRATNGKKKISTIVLAKDKSMFEKNYKNVLLINLDNLKVEKKKPTPTTTPSSSTTAKTAAKKTKV.

The tract at residues 99–123 (KKKPTPTTTPSSSTTAKTAAKKTKV) is disordered. Residues 103–116 (TPTTTPSSSTTAKT) are compositionally biased toward low complexity.

Belongs to the SRP14 family. As to quaternary structure, heterodimer with srp9; binds RNA as heterodimer. Component of a signal recognition particle (SRP) complex that consists of a 7SL RNA molecule and six protein subunits: srp72, srp68, srp54, srp19, srp14 and srp9.

The protein localises to the cytoplasm. Its function is as follows. Component of the signal recognition particle (SRP) complex, a ribonucleoprotein complex that mediates the cotranslational targeting of secretory and membrane proteins to the endoplasmic reticulum (ER). Srp9 together with srp14 and the Alu portion of the SRP RNA, constitutes the elongation arrest domain of SRP. The complex of srp9 and srp14 is required for SRP RNA binding. This Dictyostelium discoideum (Social amoeba) protein is Signal recognition particle 14 kDa protein (srp14-1).